Reading from the N-terminus, the 209-residue chain is APC/C-CDH1 modulator 1 (209 aa).

The interval 1 to 38 is disordered; that stretch reads MISPSKKRTILSSKNINQKPRAVVKGNELRSPSKRRSQ. Position 48 is a phosphoserine (S48). T161 carries the phosphothreonine modification. The residue at position 202 (S202) is a Phosphoserine.

Interacts with CDH1, BMH1 and BMH2.

In terms of biological role, negative regulator of GDH1, the activator protein that regulates the ubiquitin ligase activity and substrate specificity of the anaphase promoting complex/cyclosome (APC/C), and which is required for exit from mitosis, cytokinesis and formation of prereplicative complexes in G1. The polypeptide is APC/C-CDH1 modulator 1 (ACM1) (Saccharomyces cerevisiae (strain ATCC 204508 / S288c) (Baker's yeast)).